We begin with the raw amino-acid sequence, 202 residues long: Imidazoleglycerol-phosphate dehydratase (202 aa).

Belongs to the imidazoleglycerol-phosphate dehydratase family. As to quaternary structure, homotrimer.

It carries out the reaction D-erythro-1-(imidazol-4-yl)glycerol 3-phosphate = 3-(imidazol-4-yl)-2-oxopropyl phosphate + H2O. Its pathway is amino-acid biosynthesis; L-histidine biosynthesis; L-histidine from 5-phospho-alpha-D-ribose 1-diphosphate: step 6/9. This Cryptococcus neoformans var. neoformans serotype D (strain B-3501A) (Filobasidiella neoformans) protein is Imidazoleglycerol-phosphate dehydratase (HIS3).